A 279-amino-acid polypeptide reads, in one-letter code: Ribose-phosphate pyrophosphokinase (279 aa).

ATP contacts are provided by residues 31-33 (DGE) and 88-89 (RQ). Mg(2+) contacts are provided by His121 and Asp159. Lys182 is a catalytic residue. Residues Arg184, Asp208, and 212 to 216 (STGGT) each bind D-ribose 5-phosphate.

This sequence belongs to the ribose-phosphate pyrophosphokinase family. Class III (archaeal) subfamily. Mg(2+) is required as a cofactor.

Its subcellular location is the cytoplasm. The catalysed reaction is D-ribose 5-phosphate + ATP = 5-phospho-alpha-D-ribose 1-diphosphate + AMP + H(+). The protein operates within metabolic intermediate biosynthesis; 5-phospho-alpha-D-ribose 1-diphosphate biosynthesis; 5-phospho-alpha-D-ribose 1-diphosphate from D-ribose 5-phosphate (route I): step 1/1. Functionally, involved in the biosynthesis of the central metabolite phospho-alpha-D-ribosyl-1-pyrophosphate (PRPP) via the transfer of pyrophosphoryl group from ATP to 1-hydroxyl of ribose-5-phosphate (Rib-5-P). In Pyrococcus furiosus (strain ATCC 43587 / DSM 3638 / JCM 8422 / Vc1), this protein is Ribose-phosphate pyrophosphokinase.